The sequence spans 526 residues: Hyaluronidase-5 (526 aa).

The signal sequence occupies residues 1 to 35; sequence MRVLYFKHSFFRSLLKSNGLPQTLLVFLLIPCYLT. Intrachain disulfides connect C60–C351, C223–C237, C376–C387, C381–C435, and C437–C443. Catalysis depends on E147, which acts as the Proton donor. N-linked (GlcNAc...) asparagine glycosylation is found at N165 and N179.

It belongs to the glycosyl hydrolase 56 family. In terms of tissue distribution, expressed in testis, epididymal sperm and epididymides (at protein level). Expressed at highest levels in testis with lesser amounts in epididymal sperm.

It localises to the cell membrane. It is found in the cytoplasmic vesicle. The protein resides in the secretory vesicle. Its subcellular location is the acrosome membrane. The protein localises to the secreted. The enzyme catalyses Random hydrolysis of (1-&gt;4)-linkages between N-acetyl-beta-D-glucosamine and D-glucuronate residues in hyaluronate.. Catalyzes the hydrolysis of hyaluronan into smaller oligosaccharide fragments. Does not appear to be essential for fertilization. This Mus musculus (Mouse) protein is Hyaluronidase-5.